A 159-amino-acid chain; its full sequence is MQVRIIAVGKIKERFLSEGIAEYTKRLSPYLKLSIVEIPEEHRGTRAPAGQEELAKEKEGGRILAAIPERAYVVALDLRGTEISSIELAARMHDWQLAGTNTIAFVIGGDLGLSDAVINRAAFRLSLSPLTFTHPMARLILVEQLYRACRINSGEPYHK.

S-adenosyl-L-methionine contacts are provided by residues L76, G108, and 127–132 (LSPLTF).

The protein belongs to the RNA methyltransferase RlmH family.

Its subcellular location is the cytoplasm. The catalysed reaction is pseudouridine(1915) in 23S rRNA + S-adenosyl-L-methionine = N(3)-methylpseudouridine(1915) in 23S rRNA + S-adenosyl-L-homocysteine + H(+). In terms of biological role, specifically methylates the pseudouridine at position 1915 (m3Psi1915) in 23S rRNA. This Methanoregula boonei (strain DSM 21154 / JCM 14090 / 6A8) protein is Putative ribosomal RNA large subunit methyltransferase H.